The following is a 339-amino-acid chain: Glycerol-3-phosphate dehydrogenase [NAD(P)+] (339 aa).

The NADPH site is built by Ser-15, Tyr-16, His-36, and Lys-110. Lys-110, Gly-139, and Thr-141 together coordinate sn-glycerol 3-phosphate. Ala-143 provides a ligand contact to NADPH. The sn-glycerol 3-phosphate site is built by Lys-195, Asp-248, Ser-258, Arg-259, and Asn-260. Lys-195 (proton acceptor) is an active-site residue. Position 259 (Arg-259) interacts with NADPH. Residues Val-283 and Glu-285 each coordinate NADPH.

It belongs to the NAD-dependent glycerol-3-phosphate dehydrogenase family.

The protein resides in the cytoplasm. The catalysed reaction is sn-glycerol 3-phosphate + NAD(+) = dihydroxyacetone phosphate + NADH + H(+). It carries out the reaction sn-glycerol 3-phosphate + NADP(+) = dihydroxyacetone phosphate + NADPH + H(+). The protein operates within membrane lipid metabolism; glycerophospholipid metabolism. In terms of biological role, catalyzes the reduction of the glycolytic intermediate dihydroxyacetone phosphate (DHAP) to sn-glycerol 3-phosphate (G3P), the key precursor for phospholipid synthesis. The protein is Glycerol-3-phosphate dehydrogenase [NAD(P)+] of Shigella boydii serotype 18 (strain CDC 3083-94 / BS512).